The chain runs to 213 residues: A-type ATP synthase subunit D (213 aa).

The protein belongs to the V-ATPase D subunit family. As to quaternary structure, has multiple subunits with at least A(3), B(3), C, D, E, F, H, I and proteolipid K(x).

The protein resides in the cell membrane. Functionally, component of the A-type ATP synthase that produces ATP from ADP in the presence of a proton gradient across the membrane. The protein is A-type ATP synthase subunit D of Saccharolobus islandicus (strain L.S.2.15 / Lassen #1) (Sulfolobus islandicus).